The primary structure comprises 46 residues: Large ribosomal subunit protein bL34 (46 aa).

It belongs to the bacterial ribosomal protein bL34 family.

This Synechococcus sp. (strain JA-2-3B'a(2-13)) (Cyanobacteria bacterium Yellowstone B-Prime) protein is Large ribosomal subunit protein bL34.